Here is a 133-residue protein sequence, read N- to C-terminus: Small ribosomal subunit protein uS11 (133 aa).

The protein belongs to the universal ribosomal protein uS11 family. Part of the 30S ribosomal subunit. Interacts with proteins S7 and S18. Binds to IF-3.

Its function is as follows. Located on the platform of the 30S subunit, it bridges several disparate RNA helices of the 16S rRNA. Forms part of the Shine-Dalgarno cleft in the 70S ribosome. The polypeptide is Small ribosomal subunit protein uS11 (Ralstonia nicotianae (strain ATCC BAA-1114 / GMI1000) (Ralstonia solanacearum)).